Here is a 175-residue protein sequence, read N- to C-terminus: Ferritin light chain (175 aa).

S2 is modified (N-acetylserine). A Ferritin-like diiron domain is found at 7–156; that stretch reads QNYSTEVEAA…DHLTNIQRLV (150 aa). The Fe cation site is built by E54, E57, E58, E61, and E64. The catalytic site for iron oxidation stretch occupies residues 54–61; it reads ELAEEKRE.

Belongs to the ferritin family. Oligomer of 24 subunits. There are two types of subunits: L (light) chain and H (heavy) chain. The major chain can be light or heavy, depending on the species and tissue type. The functional molecule forms a roughly spherical shell with a diameter of 12 nm and contains a central cavity into which the insoluble mineral iron core is deposited. Interacts with NCOA4.

The protein localises to the cytoplasmic vesicle. The protein resides in the autophagosome. Its subcellular location is the cytoplasm. It is found in the autolysosome. Stores iron in a soluble, non-toxic, readily available form. Important for iron homeostasis. Iron is taken up in the ferrous form and deposited as ferric hydroxides after oxidation. Also plays a role in delivery of iron to cells. Mediates iron uptake in capsule cells of the developing kidney. Delivery to lysosomes by the cargo receptor NCOA4 for autophagic degradation and release or iron. This chain is Ferritin light chain (FTL), found in Equus caballus (Horse).